We begin with the raw amino-acid sequence, 597 residues long: Electron transfer flavoprotein-ubiquinone oxidoreductase, mitochondrial (597 aa).

Residue 53 to 67 (VVIVGGGPSGLSAAI) coordinates FAD. An intramembrane segment occupies 91 to 112 (IGGHTLSGAVIETRALDELIPN). A ubiquinone-binding residues include Gly-285 and Gly-286. Residues 409 to 426 (IDPATYDKNIRDTYVVKE) lie within the membrane without spanning it. Positions 540, 566, 569, and 572 each coordinate [4Fe-4S] cluster. The 4Fe-4S ferredoxin-type domain maps to 557 to 586 (KRLQINAQNCIHCKTCDIKDPQQNINWVTP).

The protein belongs to the ETF-QO/FixC family. In terms of assembly, monomer. The cofactor is [4Fe-4S] cluster. FAD is required as a cofactor.

It is found in the mitochondrion inner membrane. It catalyses the reaction a ubiquinone + reduced [electron-transfer flavoprotein] = a ubiquinol + oxidized [electron-transfer flavoprotein] + H(+). Its function is as follows. Accepts electrons from ETF and reduces ubiquinone. In Caenorhabditis elegans, this protein is Electron transfer flavoprotein-ubiquinone oxidoreductase, mitochondrial (let-721).